A 93-amino-acid polypeptide reads, in one-letter code: Putative transmembrane protein ORF25 (93 aa).

The next 3 helical transmembrane spans lie at 1–21, 22–42, and 60–80; these read MAGIHVVLGLFEGALFTNVNA, FLVLMIILSGLIGLFSGYASI, and LWIFNSMLYIIMTIVFVVMSL.

The protein localises to the host membrane. The chain is Putative transmembrane protein ORF25 from His1 virus (isolate Australia/Victoria) (His1V).